We begin with the raw amino-acid sequence, 1197 residues long: Sensor protein EvgS (1197 aa).

The first 21 residues, 1–21 (MKFLPYIFLLCCGLWSTISFA), serve as a signal peptide directing secretion. Residues 22 to 325 (DEDYIEYRGI…SMTDENGSVR (304 aa)) are Cytoplasmic-facing. Residues 326 to 346 (GVMGDILNIITLQTGLNFSPI) form a helical membrane-spanning segment. The Periplasmic segment spans residues 347–537 (TVSHNIHAGT…TWDLYSEQFY (191 aa)). Residues 538–558 (IVTTLSVLLVGSSLLWGFYLL) traverse the membrane as a helical segment. Over 559–1197 (RSVRRRKVIQ…EIAVFCQKND (639 aa)) the chain is Cytoplasmic. Positions 718–938 (TMSHEIRTPI…TFTITIPVEI (221 aa)) constitute a Histidine kinase domain. Histidine 721 bears the Phosphohistidine; by autocatalysis mark. The Response regulatory domain maps to 960–1074 (SILIADDHPT…VLKTHLSQLH (115 aa)). Aspartate 1009 bears the 4-aspartylphosphate mark. In terms of domain architecture, HPt spans 1098–1197 (DLQLMQEILM…EIAVFCQKND (100 aa)). Position 1137 is a phosphohistidine (histidine 1137).

Post-translationally, activation requires a sequential transfer of a phosphate group from a His in the primary transmitter domain, to an Asp in the receiver domain and to a His in the secondary transmitter domain.

It localises to the cell inner membrane. It catalyses the reaction ATP + protein L-histidine = ADP + protein N-phospho-L-histidine.. Member of the two-component regulatory system EvgS/EvgA. Phosphorylates EvgA via a four-step phosphorelay in response to environmental signals. The polypeptide is Sensor protein EvgS (evgS) (Escherichia coli (strain K12)).